The sequence spans 176 residues: Large ribosomal subunit protein uL6 (176 aa).

This sequence belongs to the universal ribosomal protein uL6 family. In terms of assembly, part of the 50S ribosomal subunit.

Functionally, this protein binds to the 23S rRNA, and is important in its secondary structure. It is located near the subunit interface in the base of the L7/L12 stalk, and near the tRNA binding site of the peptidyltransferase center. The polypeptide is Large ribosomal subunit protein uL6 (Methanosarcina mazei (strain ATCC BAA-159 / DSM 3647 / Goe1 / Go1 / JCM 11833 / OCM 88) (Methanosarcina frisia)).